A 37-amino-acid polypeptide reads, in one-letter code: Large ribosomal subunit protein bL36 (37 aa).

This sequence belongs to the bacterial ribosomal protein bL36 family.

The protein is Large ribosomal subunit protein bL36 of Shewanella woodyi (strain ATCC 51908 / MS32).